A 299-amino-acid chain; its full sequence is MSESTRLRIAIQKSGRLSKESQKLLKSCGVKFNVNEQRLIAHSDNMPIDLLRVRDDDIPGLVMDGVVDLGIIGENVLEEEQIERQSLGKPAECVKLRELDFGACRLSLAVPNEFEYQDASSLEGLRIATSYPNLLRRYMQEQGINYRDCMLKGSVEVAPRAGLSDGICDLVSTGATLEANGLYETEVIYRSMACIIQSTQSQPDDKQALINKILSRINGVVRAKESKYILLHAPTETLEQIVALLPGAENPTVLPLNDDTNRVAIHAVSTEDLFWDTMEQLTQLGASSILVMPIEKMMG.

This sequence belongs to the ATP phosphoribosyltransferase family. Long subfamily. Requires Mg(2+) as cofactor.

The protein localises to the cytoplasm. The catalysed reaction is 1-(5-phospho-beta-D-ribosyl)-ATP + diphosphate = 5-phospho-alpha-D-ribose 1-diphosphate + ATP. It functions in the pathway amino-acid biosynthesis; L-histidine biosynthesis; L-histidine from 5-phospho-alpha-D-ribose 1-diphosphate: step 1/9. Its activity is regulated as follows. Feedback inhibited by histidine. Functionally, catalyzes the condensation of ATP and 5-phosphoribose 1-diphosphate to form N'-(5'-phosphoribosyl)-ATP (PR-ATP). Has a crucial role in the pathway because the rate of histidine biosynthesis seems to be controlled primarily by regulation of HisG enzymatic activity. This Shewanella pealeana (strain ATCC 700345 / ANG-SQ1) protein is ATP phosphoribosyltransferase.